The sequence spans 160 residues: Phosphopantetheine adenylyltransferase (160 aa).

S10 serves as a coordination point for substrate. Residues 10–11 (SF) and H18 contribute to the ATP site. Substrate is bound by residues K42, L74, and R88. Residues 89–91 (GLR), E99, and 124–130 (YSFLSSS) each bind ATP.

The protein belongs to the bacterial CoaD family. In terms of assembly, homohexamer. The cofactor is Mg(2+).

It is found in the cytoplasm. The enzyme catalyses (R)-4'-phosphopantetheine + ATP + H(+) = 3'-dephospho-CoA + diphosphate. The protein operates within cofactor biosynthesis; coenzyme A biosynthesis; CoA from (R)-pantothenate: step 4/5. Functionally, reversibly transfers an adenylyl group from ATP to 4'-phosphopantetheine, yielding dephospho-CoA (dPCoA) and pyrophosphate. The polypeptide is Phosphopantetheine adenylyltransferase (Bacillus velezensis (strain DSM 23117 / BGSC 10A6 / LMG 26770 / FZB42) (Bacillus amyloliquefaciens subsp. plantarum)).